The following is a 246-amino-acid chain: Transcription factor A, mitochondrial (246 aa).

A mitochondrion-targeting transit peptide spans 1–42 (MALLRGVWGVLNALGKSGADLCAGCGSRLRYPFSFAYVPKWF). Residues 50–118 (PKKPMTSYVR…VYKEEINRIQ (69 aa)) constitute a DNA-binding region (HMG box 1). 2 positions are modified to phosphoserine; by PKA: serine 56 and serine 61. Threonine 122 carries the phosphothreonine modification. The HMG box 2 DNA-binding region spans 155 to 219 (PKRPRSAYNI…RYYNEMKSWE (65 aa)). Serine 160 bears the Phosphoserine; by PKA mark. 2 positions are modified to phosphoserine: serine 193 and serine 195.

As to quaternary structure, monomer; binds DNA as a monomer. Homodimer. Component of the mitochondrial transcription initiation complex, composed at least of TFB2M, TFAM and POLRMT. In this complex TFAM recruits POLRMT to the promoter whereas TFB2M induces structural changes in POLRMT to enable promoter opening and trapping of the DNA non-template strand. Upon metabolic stress, forms a complex composed of FOXO3, SIRT3, TFAM and POLRMT. Interacts with TFB1M and TFB2M. Interacts with CLPX; this enhances DNA-binding. Post-translationally, phosphorylation by PKA within the HMG box 1 impairs DNA binding and promotes degradation by the AAA+ Lon protease.

It localises to the mitochondrion. Its subcellular location is the mitochondrion matrix. The protein localises to the mitochondrion nucleoid. In terms of biological role, binds to the mitochondrial light strand promoter and functions in mitochondrial transcription regulation. Component of the mitochondrial transcription initiation complex, composed at least of TFB2M, TFAM and POLRMT that is required for basal transcription of mitochondrial DNA. In this complex, TFAM recruits POLRMT to a specific promoter whereas TFB2M induces structural changes in POLRMT to enable promoter opening and trapping of the DNA non-template strand. Required for accurate and efficient promoter recognition by the mitochondrial RNA polymerase. Promotes transcription initiation from the HSP1 and the light strand promoter by binding immediately upstream of transcriptional start sites. Is able to unwind DNA. Bends the mitochondrial light strand promoter DNA into a U-turn shape via its HMG boxes. Required for maintenance of normal levels of mitochondrial DNA. May play a role in organizing and compacting mitochondrial DNA. This Bos taurus (Bovine) protein is Transcription factor A, mitochondrial.